We begin with the raw amino-acid sequence, 156 residues long: Small ribosomal subunit protein uS7 (156 aa).

The protein belongs to the universal ribosomal protein uS7 family. As to quaternary structure, part of the 30S ribosomal subunit. Contacts proteins S9 and S11.

In terms of biological role, one of the primary rRNA binding proteins, it binds directly to 16S rRNA where it nucleates assembly of the head domain of the 30S subunit. Is located at the subunit interface close to the decoding center, probably blocks exit of the E-site tRNA. The protein is Small ribosomal subunit protein uS7 of Bacillus pumilus (strain SAFR-032).